The primary structure comprises 107 residues: High mobility group protein HMG-I/HMG-Y (107 aa).

The disordered stretch occupies residues 1 to 107 (MSESSSKSSQ…ISQESSEEEQ (107 aa)). At serine 2 the chain carries N-acetylserine. An N6-acetyllysine modification is found at lysine 7. ADP-ribosylserine is present on serine 8. Serine 9 carries the ADP-ribosylserine; alternate modification. Serine 9 carries the post-translational modification Phosphoserine; alternate. Lysine 15 bears the N6-acetyllysine; alternate mark. Lysine 15 participates in a covalent cross-link: Glycyl lysine isopeptide (Lys-Gly) (interchain with G-Cter in SUMO2); alternate. The segment covering 15 to 24 (KQEKDGTEKR) has biased composition (basic and acidic residues). The a.T hook 1 DNA-binding region spans 21 to 31 (TEKRGRGRPRK). An Asymmetric dimethylarginine; alternate modification is found at arginine 26. The residue at position 26 (arginine 26) is an Omega-N-methylarginine; alternate. A Symmetric dimethylarginine; alternate modification is found at arginine 26. Residue serine 36 is modified to Phosphoserine; by HIPK2 and CDC2. A phosphothreonine mark is found at threonine 39 and valine 42. A phosphoserine mark is found at serine 44 and serine 49. Threonine 53 is subject to Phosphothreonine; by HIPK2 and CDC2. The segment at residues 53-63 (TPKRPRGRPKG) is a DNA-binding region (a.T hook 2). Positions 53 to 77 (TPKRPRGRPKGSKNKGAAKTRKTTT) are interaction with HIPK2. Positions 55-74 (KRPRGRPKGSKNKGAAKTRK) are enriched in basic residues. 2 positions are modified to asymmetric dimethylarginine; by PRMT6; alternate: arginine 58 and arginine 60. Omega-N-methylarginine; by PRMT6; alternate is present on residues arginine 58 and arginine 60. Residue lysine 67 is modified to Phosphothreonine. At threonine 78 the chain carries Phosphothreonine; by HIPK2 and CDC2. The segment at residues 78–89 (TPGRKPRGRPKK) is a DNA-binding region (a.T hook 3). The segment covering 93–107 (EEEEGISQESSEEEQ) has biased composition (acidic residues). Serine 99 is modified (phosphoserine). Phosphoserine; by CK occurs at positions 102 and 103.

The protein belongs to the HMGA family. In terms of assembly, interacts with HIPK2. In terms of processing, constitutively phosphorylated on two or three sites. Hyperphosphorylated at early stages of apoptosis, followed by dephosphorylation and methylation, which coincides with chromatin condensation. Isoforms HMG-I and HMG-Y can be phosphorylated by HIPK2. Phosphorylation of HMG-I at Ser-36, Thr-53 and Thr-78 and of HMG-Y at Thr-42 and Thr-67 by HIPK2 modulates DNA-binding affinity. HMG-Y is not methylated. Post-translationally, methylation at Arg-58 is mutually exclusive with methylation at Arg-60.

It is found in the nucleus. The protein resides in the chromosome. Functionally, HMG-I/Y bind preferentially to the minor groove of A+T rich regions in double-stranded DNA. It is suggested that these proteins could function in nucleosome phasing and in the 3'-end processing of mRNA transcripts. They are also involved in the transcription regulation of genes containing, or in close proximity to A+T-rich regions. The sequence is that of High mobility group protein HMG-I/HMG-Y (HMGA1) from Homo sapiens (Human).